The sequence spans 220 residues: Polyadenylate-binding protein 2 (220 aa).

The segment at 1 to 24 (MEEEEHEVYGGEIPDVGEMDGDME) is disordered. Residues 34 to 74 (AADDDAVKELDEMKKRLKEMEDEAAALREMQAKVEKEMGAQ) are a coiled coil. The necessary for homooligomerization stretch occupies residues 78–219 (SIAANQAGKE…FRRPMRYMPY (142 aa)). An RRM domain is found at 92 to 168 (RSVFVGNVDY…RQLKVLQKRT (77 aa)). A Nuclear localization signal motif is present at residues 165–172 (QKRTNVPG).

Monomer and homooligomer. Binds RNA as a monomer and oligomerizes when bound to poly(A). Forms a complex with cleavage and polyadenylation specificity factor (CPSF) subunits PAPS2, FIPS5, PABN3 and PABN1. Interacts with CSP3.

The protein localises to the nucleus speckle. It localises to the cytoplasm. Involved in the 3'-end formation of mRNA precursors (pre-mRNA) by the addition of a poly(A) tail of 200-250 nt to the upstream cleavage product. Stimulates poly(A) polymerase (PAPOLA) conferring processivity on the poly(A) tail elongation reaction and also controls the poly(A) tail length. Increases the affinity of poly(A) polymerase for RNA. Binds to poly(A) and to poly(G) with high affinity. May protect the poly(A) tail from degradation. The sequence is that of Polyadenylate-binding protein 2 from Arabidopsis thaliana (Mouse-ear cress).